A 274-amino-acid polypeptide reads, in one-letter code: NADPH-dependent 7-cyano-7-deazaguanine reductase (274 aa).

80–82 (VES) serves as a coordination point for substrate. NADPH is bound at residue 82–83 (SK). The active-site Thioimide intermediate is Cys181. The active-site Proton donor is Asp188. Position 220-221 (220-221 (HE)) interacts with substrate. Position 249-250 (249-250 (RG)) interacts with NADPH.

The protein belongs to the GTP cyclohydrolase I family. QueF type 2 subfamily. As to quaternary structure, homodimer.

Its subcellular location is the cytoplasm. The enzyme catalyses 7-aminomethyl-7-carbaguanine + 2 NADP(+) = 7-cyano-7-deazaguanine + 2 NADPH + 3 H(+). It functions in the pathway tRNA modification; tRNA-queuosine biosynthesis. Its function is as follows. Catalyzes the NADPH-dependent reduction of 7-cyano-7-deazaguanine (preQ0) to 7-aminomethyl-7-deazaguanine (preQ1). This is NADPH-dependent 7-cyano-7-deazaguanine reductase from Burkholderia ambifaria (strain ATCC BAA-244 / DSM 16087 / CCUG 44356 / LMG 19182 / AMMD) (Burkholderia cepacia (strain AMMD)).